A 42-amino-acid polypeptide reads, in one-letter code: uncharacterized protein (42 aa).

A helical transmembrane segment spans residues 15–35 (INVCLSFFFLFYFIFVLFFAA).

It localises to the membrane. This is an uncharacterized protein from Dictyostelium discoideum (Social amoeba).